Consider the following 210-residue polypeptide: Histidine biosynthesis bifunctional protein HisIE (210 aa).

Residues 1–121 (MNPASPFATL…DAQEESQMVW (121 aa)) form a phosphoribosyl-AMP cyclohydrolase region. The interval 122–210 (LHQLEQLLAE…VINKLKERHK (89 aa)) is phosphoribosyl-ATP pyrophosphohydrolase.

It in the N-terminal section; belongs to the PRA-CH family. The protein in the C-terminal section; belongs to the PRA-PH family.

Its subcellular location is the cytoplasm. The catalysed reaction is 1-(5-phospho-beta-D-ribosyl)-ATP + H2O = 1-(5-phospho-beta-D-ribosyl)-5'-AMP + diphosphate + H(+). The enzyme catalyses 1-(5-phospho-beta-D-ribosyl)-5'-AMP + H2O = 1-(5-phospho-beta-D-ribosyl)-5-[(5-phospho-beta-D-ribosylamino)methylideneamino]imidazole-4-carboxamide. It functions in the pathway amino-acid biosynthesis; L-histidine biosynthesis; L-histidine from 5-phospho-alpha-D-ribose 1-diphosphate: step 2/9. The protein operates within amino-acid biosynthesis; L-histidine biosynthesis; L-histidine from 5-phospho-alpha-D-ribose 1-diphosphate: step 3/9. This Vibrio cholerae serotype O1 (strain ATCC 39315 / El Tor Inaba N16961) protein is Histidine biosynthesis bifunctional protein HisIE (hisI).